Reading from the N-terminus, the 931-residue chain is Aftiphilin (931 aa).

Residues 1 to 49 (MEPDIIRMYSSSPPPLDNGAEDDEEDEFGEFGGFSEVSPSGVGFVDFDT) form a disordered region. Residues 19–29 (GAEDDEEDEFG) show a composition bias toward acidic residues. A WXXF motif 1 motif is present at residues 28–31 (FGEF). Low complexity predominate over residues 33–45 (GFSEVSPSGVGFV). Position 151 is a phosphoserine (serine 151). A compositionally biased stretch (polar residues) spans 371–381 (SVKTSDVNEIG). Residues 371 to 454 (SVKTSDVNEI…PFVTSTQDSM (84 aa)) are disordered. A Phosphoserine modification is found at serine 395. The short motif at 433–436 (FGDF) is the WXXF motif 2 element. The span at 439–454 (ANGTTPPFVTSTQDSM) shows a compositional bias: polar residues. A WXXF motif 3 motif is present at residues 476 to 479 (FGEF). Disordered regions lie at residues 494 to 561 (TESD…SSAG) and 599 to 636 (WQSQ…LQEP). Over residues 516–530 (GGKDSKPDSKLKNGQ) the composition is skewed to basic and acidic residues. Threonine 613 is subject to Phosphothreonine. A compositionally biased stretch (low complexity) spans 618–631 (SVSSAASKGAVASG). The short motif at 712 to 714 (YQW) is the CLTCL1/Clathrin-binding element. The interval 821 to 825 (LLNLD) is clathrin-binding.

Self-associates. Interacts with GGA1 (via GAE domain). Interacts with GGA3 (via GAE domain), AP1G1 (via GAE domain) and AP1G2 (via GAE domain). Component of the aftiphilin/p200/gamma-synergin complex, at least composed of AFTPH/aftiphilin, HEATR5B/p200a and SYNRG/gamma-synergin, which plays a role in the AP1G1/AP-1-mediated protein trafficking from early to recycling endosomes. Within the complex interacts with HEATR5B/p200a and SYNRG/gamma-synergin; the interactions are direct. Interacts with AP1G1/AP-1; the interaction is required to recruit AFTPH/aftiphilin to the perinuclear region of the cell. Interacts with CLTCL1/Clathrin.

It is found in the cytoplasm. The protein resides in the perinuclear region. The protein localises to the cytoplasmic vesicle. Its subcellular location is the clathrin-coated vesicle. Functionally, component of clathrin-coated vesicles. Component of the aftiphilin/p200/gamma-synergin complex, which plays roles in AP1G1/AP-1-mediated protein trafficking including the trafficking of transferrin from early to recycling endosomes, and the membrane trafficking of furin and the lysosomal enzyme cathepsin D between the trans-Golgi network (TGN) and endosomes. The polypeptide is Aftiphilin (Aftph) (Mus musculus (Mouse)).